A 397-amino-acid chain; its full sequence is Elongation factor Tu (397 aa).

In terms of domain architecture, tr-type G spans 10 to 207 (KPHVNIGTIG…ACDSYIEEPE (198 aa)). Positions 19–26 (GHIDHGKT) are G1. 19–26 (GHIDHGKT) is a binding site for GTP. Residue Thr-26 coordinates Mg(2+). The segment at 60-64 (GITIA) is G2. Positions 81–84 (DCPG) are G3. GTP contacts are provided by residues 81–85 (DCPGH) and 136–139 (NKCD). The interval 136-139 (NKCD) is G4. The G5 stretch occupies residues 174-176 (SAL).

Belongs to the TRAFAC class translation factor GTPase superfamily. Classic translation factor GTPase family. EF-Tu/EF-1A subfamily. In terms of assembly, monomer.

The protein localises to the cytoplasm. It catalyses the reaction GTP + H2O = GDP + phosphate + H(+). Its function is as follows. GTP hydrolase that promotes the GTP-dependent binding of aminoacyl-tRNA to the A-site of ribosomes during protein biosynthesis. The protein is Elongation factor Tu of Maridesulfovibrio salexigens (strain ATCC 14822 / DSM 2638 / NCIMB 8403 / VKM B-1763) (Desulfovibrio salexigens).